We begin with the raw amino-acid sequence, 58 residues long: MGKVHGSLARAGKVKNQTPKVPKLDKKKRLTGRAKKRQLYNRRFSDNGGRKKGPNSKA.

Positions 1–58 are disordered; the sequence is MGKVHGSLARAGKVKNQTPKVPKLDKKKRLTGRAKKRQLYNRRFSDNGGRKKGPNSKA. Residues 25 to 40 are compositionally biased toward basic residues; that stretch reads DKKKRLTGRAKKRQLY.

The protein belongs to the eukaryotic ribosomal protein eS30 family. In terms of assembly, component of the small ribosomal subunit. Mature ribosomes consist of a small (40S) and a large (60S) subunit. The 40S subunit contains about 32 different proteins and 1 molecule of RNA (18S). The 60S subunit contains about 42 different proteins and 3 molecules of RNA (28S, 5.8S and 5S).

It is found in the cytoplasm. Component of the ribosome, a large ribonucleoprotein complex responsible for the synthesis of proteins in the cell. The small ribosomal subunit (SSU) binds messenger RNAs (mRNAs) and translates the encoded message by selecting cognate aminoacyl-transfer RNA (tRNA) molecules. The large subunit (LSU) contains the ribosomal catalytic site termed the peptidyl transferase center (PTC), which catalyzes the formation of peptide bonds, thereby polymerizing the amino acids delivered by tRNAs into a polypeptide chain. The nascent polypeptides leave the ribosome through a tunnel in the LSU and interact with protein factors that function in enzymatic processing, targeting, and the membrane insertion of nascent chains at the exit of the ribosomal tunnel. This Plasmodium falciparum (isolate 3D7) protein is Small ribosomal subunit protein eS30.